We begin with the raw amino-acid sequence, 427 residues long: UPF0229 protein YeaH (427 aa).

The interval 84 to 110 (QSDRIERPQGGGGGSGSGQGQASQDGE) is disordered. Gly residues predominate over residues 92–102 (QGGGGGSGSGQ).

This sequence belongs to the UPF0229 family.

The protein is UPF0229 protein YeaH of Escherichia fergusonii (strain ATCC 35469 / DSM 13698 / CCUG 18766 / IAM 14443 / JCM 21226 / LMG 7866 / NBRC 102419 / NCTC 12128 / CDC 0568-73).